The chain runs to 364 residues: Nucleoporin SEH1 (364 aa).

WD repeat units lie at residues 10-49, 55-96, 111-152, 160-210, 217-258, and 275-314; these read DHKDLIHDVSYDFHGRRMATCSSDQSVKVWDKSDNGEWNC, THSG…SNDK, DSRT…NLSQ, SCKL…RKYA, TVTD…KESS, and GHNSQVWRVSWNITSTLLASSGDDGCVRLWKANYMDNWKC. The disordered stretch occupies residues 326-364; the sequence is NGAAGQAGTPGAAGTPGGPASQNALQAVAGRKKAQLMPG. Positions 327-338 are enriched in low complexity; it reads GAAGQAGTPGAA. Basic residues predominate over residues 355 to 364; sequence GRKKAQLMPG.

Belongs to the WD repeat SEC13 family. Component of the Nup107-160 subcomplex of the nuclear pore complex (NPC). The Nup107-160 subcomplex includes NUP160, NUP133, NUP107, NUP98, NUP85, NUP43, NUP37, SEH1 and SEC13. Component of the GATOR2 subcomplex, composed of MIOS, SEC13, SEH1L, WDR24 and WDR59. The GATOR2 complex interacts with CASTOR1 and CASTOR2; the interaction is negatively regulated by arginine. The GATOR2 complex interacts with SESN1, SESN2 and SESN3; the interaction is negatively regulated by amino acids.

The protein localises to the chromosome. The protein resides in the centromere. It localises to the kinetochore. It is found in the nucleus. Its subcellular location is the nuclear pore complex. The protein localises to the lysosome membrane. Its activity is regulated as follows. The GATOR2 complex is negatively regulated by the upstream amino acid sensors CASTOR1 and SESN2, which sequester the GATOR2 complex in absence of amino acids. In the presence of abundant amino acids, GATOR2 is released from CASTOR1 and SESN2 and activated. Component of the Nup107-160 subcomplex of the nuclear pore complex (NPC). The Nup107-160 subcomplex is required for the assembly of a functional NPC. The Nup107-160 subcomplex is also required for normal kinetochore microtubule attachment, mitotic progression and chromosome segregation. This subunit plays a role in recruitment of the Nup107-160 subcomplex to the kinetochore. In terms of biological role, as a component of the GATOR2 complex, functions as an activator of the amino acid-sensing branch of the mTORC1 signaling pathway. The GATOR2 complex indirectly activates mTORC1 through the inhibition of the GATOR1 subcomplex. GATOR2 probably acts as an E3 ubiquitin-protein ligase toward GATOR1. In the presence of abundant amino acids, the GATOR2 complex mediates ubiquitination of the NPRL2 core component of the GATOR1 complex, leading to GATOR1 inactivation. In the absence of amino acids, GATOR2 is inhibited, activating the GATOR1 complex. The chain is Nucleoporin SEH1 (seh1l) from Osmerus mordax (Rainbow smelt).